A 223-amino-acid polypeptide reads, in one-letter code: Large ribosomal subunit protein uL4c (223 aa).

Residues 61-96 (TKTRSEVEGGGKKPWKQKGTGNARAGSSNSPLWKGG) are disordered.

It belongs to the universal ribosomal protein uL4 family. Part of the 50S ribosomal subunit.

It localises to the plastid. It is found in the chloroplast. Functionally, probably binds the 23S rRNA. This chain is Large ribosomal subunit protein uL4c (rpl4), found in Guillardia theta (Cryptophyte).